Consider the following 94-residue polypeptide: Non-specific lipid-transfer protein C4 (94 aa).

A signal peptide spans 1–26; it reads MAASKGNAAAAACALVLVLLAVGAEA. Cystine bridges form between Cys-34-Cys-72, Cys-44-Cys-59, Cys-60-Cys-85, and Cys-70-Cys-92. Asn-91 is a glycosylation site (N-linked (GlcNAc...) asparagine).

Belongs to the plant LTP family.

In terms of biological role, lipid-transfer protein that may be regulated by the transcription factor UDT1 in developing anthers and play a role in tapetum development. In Oryza sativa subsp. japonica (Rice), this protein is Non-specific lipid-transfer protein C4.